The sequence spans 166 residues: NAD(P)H-quinone oxidoreductase subunit I, chloroplastic (166 aa).

2 4Fe-4S ferredoxin-type domains span residues 55-84 and 95-124; these read GRIHFEFDKCIACEVCVRVCPIDLPVVDWK and LNYSIDFGICIFCGHCVEYCPTNCLSMTEE. Residues cysteine 64, cysteine 67, cysteine 70, cysteine 74, cysteine 104, cysteine 107, cysteine 110, and cysteine 114 each coordinate [4Fe-4S] cluster.

It belongs to the complex I 23 kDa subunit family. NDH is composed of at least 16 different subunits, 5 of which are encoded in the nucleus. It depends on [4Fe-4S] cluster as a cofactor.

The protein localises to the plastid. Its subcellular location is the chloroplast thylakoid membrane. The catalysed reaction is a plastoquinone + NADH + (n+1) H(+)(in) = a plastoquinol + NAD(+) + n H(+)(out). It catalyses the reaction a plastoquinone + NADPH + (n+1) H(+)(in) = a plastoquinol + NADP(+) + n H(+)(out). Functionally, NDH shuttles electrons from NAD(P)H:plastoquinone, via FMN and iron-sulfur (Fe-S) centers, to quinones in the photosynthetic chain and possibly in a chloroplast respiratory chain. The immediate electron acceptor for the enzyme in this species is believed to be plastoquinone. Couples the redox reaction to proton translocation, and thus conserves the redox energy in a proton gradient. The sequence is that of NAD(P)H-quinone oxidoreductase subunit I, chloroplastic from Perymeniopsis ovalifolia.